A 982-amino-acid polypeptide reads, in one-letter code: Glutamate [NMDA] receptor subunit 1 (982 aa).

An N-terminal signal peptide occupies residues 1-16 (MAFAVWFLSTFVIVAA). At 17 to 561 (QRHMALEHEG…TLVSFLQPFS (545 aa)) the chain is on the extracellular side. N-linked (GlcNAc...) asparagine glycans are attached at residues Asn-247, Asn-303, Asn-334, Asn-386, Asn-443, Asn-470, and Asn-490. Glycine contacts are provided by residues 518–520 (PLT) and Arg-525. A helical membrane pass occupies residues 562–582 (NTLWILVMVSVHVVALVLYLL). Topologically, residues 583-639 (DRFSPFGRFKLSHSDSNEEKALNLSSAVWFAWGVLLNSGIGEGTPRSFSARVLGMVW) are cytoplasmic. Residues 640–660 (AGFAMIIVASYTANLAAFLVL) traverse the membrane as a helical segment. Over 661 to 819 (ERPKTKLSGI…KTPNTLGLKN (159 aa)) the chain is Extracellular. Asn-681 is a glycosylation site (N-linked (GlcNAc...) asparagine). Glycine contacts are provided by Ser-691 and Asp-735. Residues 820–840 (MAGVFILVGVGIAGGVGLIII) traverse the membrane as a helical segment. The Cytoplasmic segment spans residues 841–982 (EVIYKKHQVK…YTSDVSHLVV (142 aa)). A disordered region spans residues 934–982 (EIGKPGQSPKVIGGPPHPMLGKTRPQAQQNLLPPRYSPGYTSDVSHLVV). Residues 972-982 (GYTSDVSHLVV) show a composition bias toward polar residues.

The protein belongs to the glutamate-gated ion channel (TC 1.A.10.1) family. In terms of assembly, forms a heteromeric NMDA channel with Nmdar2.

It is found in the cell membrane. The protein resides in the postsynaptic cell membrane. It localises to the postsynaptic density. Its function is as follows. NMDA receptor subtype of glutamate-gated ion channels with high calcium permeability and voltage-dependent sensitivity to magnesium. Mediated by glycine. This protein plays a key role in synaptic plasticity, synaptogenesis, excitotoxicity, memory acquisition and learning. It mediates neuronal functions in glutamate neurotransmission. Is involved in the cell surface targeting of NMDA receptors. Plays a role in associative learning and in long-term memory consolidation. This chain is Glutamate [NMDA] receptor subunit 1, found in Drosophila willistoni (Fruit fly).